The chain runs to 901 residues: Sperm-associated antigen 1 (901 aa).

TPR repeat units lie at residues 213 to 246 (ANRE…LPTA), 247 to 279 (IAYN…DPGN), and 280 to 313 (VKAL…EPDN). Residues 322–437 (EVERDLKNSE…DNPSGLKRRG (116 aa)) are disordered. A phosphoserine mark is found at Ser-351 and Ser-359. TPR repeat units follow at residues 430 to 464 (PSGL…EPTG), 472 to 505 (SILY…HPFS), 507 to 539 (KPLL…DCGI), 606 to 639 (FQAL…NSKA), and 640 to 673 (CAIY…DGEN). A disordered region spans residues 694–776 (GVDPSQVLLS…AEPAEKLDVS (83 aa)). Ser-703 carries the post-translational modification Phosphoserine. A compositionally biased stretch (basic and acidic residues) spans 708–717 (EAARHLDTKN). Phosphoserine occurs at positions 739 and 740. 756–763 (PARDGVED) is a binding site for GTP. Ser-766 is subject to Phosphoserine.

As to expression, detected in cerebellum, tongue, esophagus, forestomach, sperm and testis.

The protein localises to the cytoplasm. It is found in the dynein axonemal particle. Functionally, may play a role in the cytoplasmic assembly of the ciliary dynein arms. May play a role in fertilization. Binds GTP and has GTPase activity. The protein is Sperm-associated antigen 1 (Spag1) of Mus musculus (Mouse).